We begin with the raw amino-acid sequence, 350 residues long: Protein RecA (350 aa).

65-72 (GPESSGKT) lines the ATP pocket.

It belongs to the RecA family.

It localises to the cytoplasm. Functionally, can catalyze the hydrolysis of ATP in the presence of single-stranded DNA, the ATP-dependent uptake of single-stranded DNA by duplex DNA, and the ATP-dependent hybridization of homologous single-stranded DNAs. It interacts with LexA causing its activation and leading to its autocatalytic cleavage. In Nautilia profundicola (strain ATCC BAA-1463 / DSM 18972 / AmH), this protein is Protein RecA.